The following is a 117-amino-acid chain: cAMP-regulated phosphoprotein 19-B (117 aa).

Residues 1–37 (MSRDNQEIKAPEESSAEEQKEMDDKVTSPEKAEEIKL) are compositionally biased toward basic and acidic residues. The segment at 1–54 (MSRDNQEIKAPEESSAEEQKEMDDKVTSPEKAEEIKLKSRYPNIGPKPGGSDFL) is disordered. A Phosphoserine; by CDK2 modification is found at Ser-28. Ser-67 is modified (phosphoserine; by GWL). Residues 77 to 117 (MKNKQLPTAAPDKTEVTGDHIPTPQDLPQRKPSLVASKLAG) are disordered. Residue Thr-99 is modified to Phosphothreonine; by CDK2. Ser-109 bears the Phosphoserine; by PKA mark.

It belongs to the endosulfine family. As to quaternary structure, interacts (when phosphorylated at Ser-67) with ppp2r2d. Post-translationally, phosphorylation at Ser-67 by gwl during mitosis is essential for interaction with ppp2r2d (PR55-delta) and subsequent inactivation of PP2A.

The protein localises to the cytoplasm. Functionally, protein phosphatase inhibitor that specifically inhibits protein phosphatase 2A (PP2A) during mitosis. When phosphorylated at Ser-67 during mitosis, specifically interacts with ppp2r2d (PR55-delta) and inhibits its activity, leading to inactivation of PP2A, an essential condition to keep cyclin-B1-CDK1 activity high during M phase. This chain is cAMP-regulated phosphoprotein 19-B (arpp19-b), found in Xenopus laevis (African clawed frog).